Here is a 413-residue protein sequence, read N- to C-terminus: 2,3-diketo-5-methylthiopentyl-1-phosphate enolase (413 aa).

The active-site Proton acceptor is lysine 98. Substrate is bound by residues lysine 147, 173-176, histidine 264, glycine 337, and 359-360; these read KDDE and GG. Lysine 173, aspartate 175, and glutamate 176 together coordinate Mg(2+). An N6-carboxylysine modification is found at lysine 173.

Belongs to the RuBisCO large chain family. Type IV subfamily. Homodimer. Mg(2+) serves as cofactor.

The catalysed reaction is 5-methylsulfanyl-2,3-dioxopentyl phosphate = 2-hydroxy-5-methylsulfanyl-3-oxopent-1-enyl phosphate. The protein operates within amino-acid biosynthesis; L-methionine biosynthesis via salvage pathway; L-methionine from S-methyl-5-thio-alpha-D-ribose 1-phosphate: step 3/6. Catalyzes the enolization of 2,3-diketo-5-methylthiopentyl-1-phosphate (DK-MTP-1-P) into 2-hydroxy-3-keto-5-methylthiopentenyl-1-phosphate (HK-MTPenyl-1-P). In Geobacillus thermodenitrificans (strain NG80-2), this protein is 2,3-diketo-5-methylthiopentyl-1-phosphate enolase.